We begin with the raw amino-acid sequence, 202 residues long: Small ribosomal subunit protein uS4 (202 aa).

An S4 RNA-binding domain is found at 91-157 (CRLDNVVYRA…TPFIVARETH (67 aa)).

Belongs to the universal ribosomal protein uS4 family. Part of the 30S ribosomal subunit. Contacts protein S5. The interaction surface between S4 and S5 is involved in control of translational fidelity.

In terms of biological role, one of the primary rRNA binding proteins, it binds directly to 16S rRNA where it nucleates assembly of the body of the 30S subunit. Its function is as follows. With S5 and S12 plays an important role in translational accuracy. The sequence is that of Small ribosomal subunit protein uS4 from Nocardioides sp. (strain ATCC BAA-499 / JS614).